A 168-amino-acid chain; its full sequence is Group IIF secretory phospholipase A2 (168 aa).

The N-terminal stretch at 1 to 20 is a signal peptide; the sequence is MKKFFTVAILAGSVLSTAHG. 7 disulfide bridges follow: Cys46–Cys138, Cys48–Cys64, Cys63–Cys120, Cys69–Cys145, Cys70–Cys113, Cys79–Cys106, and Cys98–Cys111. Ca(2+) is bound by residues Tyr47, Gly49, and Gly51. His67 is a catalytic residue. Position 68 (Asp68) interacts with Ca(2+). N-linked (GlcNAc...) asparagine glycans are attached at residues Asn92 and Asn102. Residue Asp114 is part of the active site. N-linked (GlcNAc...) asparagine glycosylation is found at Asn123 and Asn144. Residues 139–168 are required for localization on the plasma membrane; it reads QGPTPNCSIYEPPPEEVTCSHQSPAPPAPP.

This sequence belongs to the phospholipase A2 family. Ca(2+) is required as a cofactor. In terms of tissue distribution, expressed at high levels in placenta, testis, thymus and at lower levels in heart, kidney, liver and prostate. Highly expressed in rheumatoid arthritic tissues, including synovial lining cells in the intima, capillary endothelial cells and plasma cells.

Its subcellular location is the secreted. The protein localises to the cell membrane. It carries out the reaction a 1,2-diacyl-sn-glycero-3-phosphocholine + H2O = a 1-acyl-sn-glycero-3-phosphocholine + a fatty acid + H(+). The catalysed reaction is 1-hexadecanoyl-2-(9Z-octadecenoyl)-sn-glycero-3-phospho-(1'-sn-glycerol) + H2O = 1-hexadecanoyl-sn-glycero-3-phospho-(1'-sn-glycerol) + (9Z)-octadecenoate + H(+). The enzyme catalyses 1-hexadecanoyl-2-(9Z,12Z-octadecadienoyl)-sn-glycero-3-phosphoethanolamine + H2O = 1-hexadecanoyl-sn-glycero-3-phosphoethanolamine + (9Z,12Z)-octadecadienoate + H(+). It catalyses the reaction 1-hexadecanoyl-2-(5Z,8Z,11Z,14Z-eicosatetraenoyl)-sn-glycero-3-phosphoethanolamine + H2O = 1-hexadecanoyl-sn-glycero-3-phosphoethanolamine + (5Z,8Z,11Z,14Z)-eicosatetraenoate + H(+). It carries out the reaction 1-hexadecanoyl-2-(9Z-octadecenoyl)-sn-glycero-3-phosphocholine + H2O = 1-hexadecanoyl-sn-glycero-3-phosphocholine + (9Z)-octadecenoate + H(+). The catalysed reaction is 1-hexadecanoyl-2-(9Z-octadecenoyl)-sn-glycero-3-phospho-L-serine + H2O = 1-hexadecanoyl-sn-glycero-3-phospho-L-serine + (9Z)-octadecenoate + H(+). Its function is as follows. Secretory calcium-dependent phospholipase A2 that primarily targets extracellular phospholipids. Hydrolyzes the ester bond of the fatty acyl group attached at the sn-2 position of phospholipids (phospholipase A2 activity), the catalytic efficiency decreasing in the following order: phosphatidylglycerols &gt; phosphatidylethanolamines &gt; phosphatidylcholines &gt; phosphatidylserines. May play a role in lipid mediator production in inflammatory conditions, by providing arachidonic acid to downstream cyclooxygenases and lipoxygenases. The protein is Group IIF secretory phospholipase A2 (PLA2G2F) of Homo sapiens (Human).